Here is a 65-residue protein sequence, read N- to C-terminus: Metallothionein-like protein 3B (65 aa).

The protein belongs to the metallothionein superfamily. Type 15 family.

Its function is as follows. Metallothioneins have a high content of cysteine residues that bind various heavy metals. In Oryza sativa subsp. indica (Rice), this protein is Metallothionein-like protein 3B (MT3B).